The following is a 298-amino-acid chain: N-acetylmuramic acid 6-phosphate etherase (298 aa).

The region spanning 55 to 218 (AANRYKKGGR…STGVMIRQGK (164 aa)) is the SIS domain. The Proton donor role is filled by Glu-83. Glu-114 is a catalytic residue.

It belongs to the GCKR-like family. MurNAc-6-P etherase subfamily. Homodimer.

The enzyme catalyses N-acetyl-D-muramate 6-phosphate + H2O = N-acetyl-D-glucosamine 6-phosphate + (R)-lactate. The protein operates within amino-sugar metabolism; N-acetylmuramate degradation. In terms of biological role, specifically catalyzes the cleavage of the D-lactyl ether substituent of MurNAc 6-phosphate, producing GlcNAc 6-phosphate and D-lactate. The sequence is that of N-acetylmuramic acid 6-phosphate etherase from Lactobacillus acidophilus (strain ATCC 700396 / NCK56 / N2 / NCFM).